The primary structure comprises 803 residues: Ubiquitin carboxyl-terminal hydrolase 45 (803 aa).

A disordered region spans residues 1–34 (MRLKDPFSLKTADMTKRSNKPKKPRDEDSSDEVG). The segment at 36–153 (LTCQHVSRAV…QTLDFLQKQS (118 aa)) adopts a UBP-type zinc-finger fold. Zn(2+) is bound by residues cysteine 38, histidine 40, cysteine 62, cysteine 65, cysteine 85, cysteine 88, cysteine 93, histidine 100, histidine 104, histidine 113, cysteine 126, and cysteine 129. One can recognise a USP domain in the interval 192–802 (KGINNLGNTC…QAYLLFYEEL (611 aa)). The active-site Nucleophile is cysteine 201. The tract at residues 394-554 (PTNPARLGKS…LPSIRPQQGG (161 aa)) is disordered. Positions 403–417 (SGREQDSLTSHDDSL) are enriched in basic and acidic residues. Composition is skewed to polar residues over residues 419–440 (AHSQ…SRHS) and 469–480 (SYRTDTMGSQSD). The segment covering 502–531 (SEWSPRIPSVSSHSSTSDKTSITTTLSTTT) has biased composition (low complexity). Residues 532-545 (HNPSLKSNPSSTPL) show a composition bias toward polar residues. Histidine 739 acts as the Proton acceptor in catalysis.

It belongs to the peptidase C19 family. As to expression, retina.

Its subcellular location is the photoreceptor inner segment. The protein resides in the cytoplasm. It localises to the nucleus. It catalyses the reaction Thiol-dependent hydrolysis of ester, thioester, amide, peptide and isopeptide bonds formed by the C-terminal Gly of ubiquitin (a 76-residue protein attached to proteins as an intracellular targeting signal).. Functionally, catalyzes the deubiquitination of SPDL1. Plays a role in the repair of UV-induced DNA damage via deubiquitination of ERCC1, promoting its recruitment to DNA damage sites. May be involved in the maintenance of photoreceptor function. May play a role in normal retinal development. The polypeptide is Ubiquitin carboxyl-terminal hydrolase 45 (Danio rerio (Zebrafish)).